A 478-amino-acid chain; its full sequence is MALPGGAAMNITIRLQFEKDIVSFSDIAAAIGKAGGDIVGIDVISSSKVHTVRDITVSALDTKQCDLIIEALKKIRGVKIVNVSDRTFLMHIGGKIETNSKIPVKTRDDLSRVYTPGVARVCTAIAEDPRKAYSLTIKRNTVAVVSDGTAVLGLGDIGPYAAMPVMEGKAMLFKEFAGVDAFPICLDTKDTEEIIQIVKAIAPAFGGINLEDISAPRCFEIEKRLKEELDIPVFHDDQHGTAVVLLAGLLNALKIVDKKLEDIKVVLTGIGAAGIACTKILLAAGVRNIIGVDRHGAIHRDETYENPYWQEYAQLTNPDNLKGSLSDVIAGADVFIGVSAPGILKVEDVKKMARDPIVFAMANPIPEIDPELAEPYVRVMATGRSDYPNQINNVLCFPGIFRGALDCRAREINEEMKLAAAKAIASVVTEDELNETYIIPSVFNSKVVERVRQAVVEAAYRTGVARKDNIPVGGYTGQ.

Residues 12–86 (TIRLQFEKDI…GVKIVNVSDR (75 aa)) form the ACT domain. Y114 (proton donor) is an active-site residue. Residue K169 is the Proton acceptor of the active site. Positions 211, 212, and 237 each coordinate a divalent metal cation. Residues 270–273 (IGAA), N363, and N393 contribute to the NAD(+) site.

It belongs to the malic enzymes family. Homotetramer. It depends on Mg(2+) as a cofactor. Mn(2+) is required as a cofactor.

The catalysed reaction is (S)-malate + NAD(+) = pyruvate + CO2 + NADH. It carries out the reaction oxaloacetate + H(+) = pyruvate + CO2. Its activity is regulated as follows. The activity is enhanced 5-7 times by ammonium and potassium. In terms of biological role, in addition to the NAD-dependent oxidative decarboxylation of L-malate, the enzyme catalyzes the decarboxylation of oxaloacetate. The protein is NAD-dependent malic enzyme of Geobacillus stearothermophilus (Bacillus stearothermophilus).